Here is a 1050-residue protein sequence, read N- to C-terminus: Zinc finger and BTB domain-containing protein 11 (1050 aa).

The segment covering 143 to 156 (LDSGEESNESEDDL) has biased composition (acidic residues). The interval 143-173 (LDSGEESNESEDDLSNFTSPPSTASKSSKKK) is disordered. A compositionally biased stretch (low complexity) spans 157-168 (SNFTSPPSTASK). The BTB domain occupies 214–282 (CDVTLLIEGE…AYTSVLSFDF (69 aa)). Disordered regions lie at residues 373-514 (AEQN…EGGY) and 543-563 (LVQR…STEE). Positions 378 to 399 (EPEQQPAPQASPEAEASVSPVE) are enriched in low complexity. Basic and acidic residues-rich tracts occupy residues 478–501 (SKDE…DTYR) and 553–563 (PKRDAKESTEE). 2 C2H2-type zinc fingers span residues 566 to 588 (HKCG…TLKH) and 594 to 616 (YKCP…LIRH). The disordered stretch occupies residues 617-641 (TRKEAPTSSSSNSTSTEASGGSSEK). Positions 623–638 (TSSSSNSTSTEASGGS) are enriched in low complexity. C2H2-type zinc fingers lie at residues 648 to 670 (FICS…MLKH), 676 to 698 (HACQ…QSLH), 704 to 726 (FQCE…MSIH), 732 to 754 (YFCS…LKKH), 763 to 785 (YHCT…MNKH), 791 to 813 (FQCQ…VKSH), 819 to 843 (YRCN…KATH), 855 to 877 (RVCD…MNNH), 883 to 905 (FECL…VRTH), and 911 to 934 (YVCP…TKFH).

The protein resides in the nucleus. The protein localises to the nucleolus. May be involved in transcriptional regulation. This is Zinc finger and BTB domain-containing protein 11 from Mus musculus (Mouse).